Consider the following 217-residue polypeptide: UPF0502 protein VIBHAR_05349 (217 aa).

This sequence belongs to the UPF0502 family.

This Vibrio campbellii (strain ATCC BAA-1116) protein is UPF0502 protein VIBHAR_05349.